The chain runs to 1009 residues: Type VII secretion system accessory factor EsaA (1009 aa).

6 helical membrane passes run 7-27 (IYALIVTLIIIIAIVSMIFFV), 822-842 (ISPTLFVLLMYLLSMITAYIF), 869-889 (AITSGVIGATGLVEGLIVGLI), 903-923 (KFILMVILTMMVFVLINTYLL), 928-948 (SIGMFLMIAALGLYFVAMNNL), and 979-999 (IGLALVILTVLVIIGFVLNMF).

Belongs to the EsaA family. As to quaternary structure, homodimer. Interacts with EssB.

Its subcellular location is the cell membrane. In terms of biological role, component of the type VII secretion system (Ess). Provides together with EssB and other components such as EssC and EssE a secretion platform across the cytoplasmic membrane in the host. In Staphylococcus aureus (strain MRSA252), this protein is Type VII secretion system accessory factor EsaA.